The sequence spans 65 residues: Antimicrobial peptide THP1 (65 aa).

The first 25 residues, 1–25 (MRIVYLLFPFILLLAQGAAGSSLAL), serve as a signal peptide directing secretion. Cystine bridges form between Cys31–Cys53, Cys38–Cys59, and Cys43–Cys60. Residues 61–65 (KTLLG) constitute a propeptide that is removed on maturation.

It belongs to the beta-defensin family.

The protein localises to the secreted. Bactericidal activity; inhibits S.aureus and E.coli. In Meleagris gallopavo (Wild turkey), this protein is Antimicrobial peptide THP1.